The primary structure comprises 1028 residues: Contactin-6 (1028 aa).

An N-terminal signal peptide occupies residues 1 to 19 (MRLLWKLVILLPLINSSAG). 6 Ig-like C2-type domains span residues 26-117 (PIFT…AKLQ), 122-208 (EDFE…RSVQ), 227-308 (PKIE…RNLA), 318-402 (PEWE…AELR), 408-495 (PDFS…GSLI), and 499-587 (RTVI…ESLS). Cystine bridges form between cysteine 50–cysteine 100, cysteine 144–cysteine 196, cysteine 249–cysteine 297, cysteine 339–cysteine 386, cysteine 431–cysteine 479, and cysteine 521–cysteine 577. 2 N-linked (GlcNAc...) asparagine glycosylation sites follow: asparagine 65 and asparagine 193. N-linked (GlcNAc...) asparagine glycosylation is found at asparagine 368, asparagine 377, and asparagine 468. Fibronectin type-III domains follow at residues 600–698 (PPED…TKAS), 703–800 (APVN…SGED), 805–901 (APRG…TKKS), and 902–996 (PPSQ…KMSS). 4 N-linked (GlcNAc...) asparagine glycosylation sites follow: asparagine 659, asparagine 765, asparagine 860, and asparagine 865. Tyrosine 882 is subject to Phosphotyrosine. Residues 887 to 902 (TGPSSPPVNVTTKKSP) show a composition bias toward polar residues. The tract at residues 887–908 (TGPSSPPVNVTTKKSPPSQPPA) is disordered. 4 N-linked (GlcNAc...) asparagine glycosylation sites follow: asparagine 895, asparagine 931, asparagine 956, and asparagine 957. Serine 999 carries GPI-anchor amidated serine lipidation. Residues 1000–1028 (RGIQFLEPSTHFLSIVIVIFHCFAIQPLI) constitute a propeptide, removed in mature form.

It belongs to the immunoglobulin superfamily. Contactin family. As to quaternary structure, interacts with PTPRG. In terms of tissue distribution, expressed in nervous system. Highly expressed in cerebellum. Expressed at intermediate level in thalamus, subthalamic nucleus. Weakly expressed in corpus callosum, caudate nucleus and spinal cord.

The protein localises to the cell membrane. Its function is as follows. Contactins mediate cell surface interactions during nervous system development. Participates in oligodendrocytes generation by acting as a ligand of NOTCH1. Its association with NOTCH1 promotes NOTCH1 activation through the released notch intracellular domain (NICD) and subsequent translocation to the nucleus. Involved in motor coordination. This Homo sapiens (Human) protein is Contactin-6 (CNTN6).